The chain runs to 275 residues: Large ribosomal subunit protein uL2 (275 aa).

The disordered stretch occupies residues Gly222–Lys275. Residues Asp229–Asn239 show a composition bias toward basic and acidic residues.

This sequence belongs to the universal ribosomal protein uL2 family. In terms of assembly, part of the 50S ribosomal subunit. Forms a bridge to the 30S subunit in the 70S ribosome.

Functionally, one of the primary rRNA binding proteins. Required for association of the 30S and 50S subunits to form the 70S ribosome, for tRNA binding and peptide bond formation. It has been suggested to have peptidyltransferase activity; this is somewhat controversial. Makes several contacts with the 16S rRNA in the 70S ribosome. The polypeptide is Large ribosomal subunit protein uL2 (Psychrobacter cryohalolentis (strain ATCC BAA-1226 / DSM 17306 / VKM B-2378 / K5)).